The chain runs to 254 residues: Ubiquinone/menaquinone biosynthesis C-methyltransferase UbiE (254 aa).

S-adenosyl-L-methionine-binding positions include Thr-77, Asp-98, 126–127, and Ser-143; that span reads DA.

Belongs to the class I-like SAM-binding methyltransferase superfamily. MenG/UbiE family.

It carries out the reaction a 2-demethylmenaquinol + S-adenosyl-L-methionine = a menaquinol + S-adenosyl-L-homocysteine + H(+). It catalyses the reaction a 2-methoxy-6-(all-trans-polyprenyl)benzene-1,4-diol + S-adenosyl-L-methionine = a 5-methoxy-2-methyl-3-(all-trans-polyprenyl)benzene-1,4-diol + S-adenosyl-L-homocysteine + H(+). The protein operates within quinol/quinone metabolism; menaquinone biosynthesis; menaquinol from 1,4-dihydroxy-2-naphthoate: step 2/2. It participates in cofactor biosynthesis; ubiquinone biosynthesis. In terms of biological role, methyltransferase required for the conversion of demethylmenaquinol (DMKH2) to menaquinol (MKH2) and the conversion of 2-polyprenyl-6-methoxy-1,4-benzoquinol (DDMQH2) to 2-polyprenyl-3-methyl-6-methoxy-1,4-benzoquinol (DMQH2). This Blochmanniella pennsylvanica (strain BPEN) protein is Ubiquinone/menaquinone biosynthesis C-methyltransferase UbiE.